We begin with the raw amino-acid sequence, 422 residues long: UDP-N-acetylglucosamine 1-carboxyvinyltransferase (422 aa).

22–23 is a binding site for phosphoenolpyruvate; it reads KN. Arg92 serves as a coordination point for UDP-N-acetyl-alpha-D-glucosamine. Cys116 acts as the Proton donor in catalysis. The residue at position 116 (Cys116) is a 2-(S-cysteinyl)pyruvic acid O-phosphothioketal. 2 residues coordinate UDP-N-acetyl-alpha-D-glucosamine: Asp306 and Ile328.

It belongs to the EPSP synthase family. MurA subfamily.

Its subcellular location is the cytoplasm. The enzyme catalyses phosphoenolpyruvate + UDP-N-acetyl-alpha-D-glucosamine = UDP-N-acetyl-3-O-(1-carboxyvinyl)-alpha-D-glucosamine + phosphate. It functions in the pathway cell wall biogenesis; peptidoglycan biosynthesis. In terms of biological role, cell wall formation. Adds enolpyruvyl to UDP-N-acetylglucosamine. This is UDP-N-acetylglucosamine 1-carboxyvinyltransferase from Elusimicrobium minutum (strain Pei191).